The chain runs to 752 residues: Photosystem I P700 chlorophyll a apoprotein A1 (752 aa).

8 helical membrane-spanning segments follow: residues 73-96, 159-182, 198-222, 294-312, 349-372, 388-414, 436-458, and 533-551; these read IFSA…FHGA, LYWT…FHYH, MNHH…HIAL, IAHH…GHMY, WHAQ…HHMY, LSLF…IFMV, AIIS…FYIH, and FMVH…LILL. Residues C575 and C584 each contribute to the [4Fe-4S] cluster site. The next 2 helical transmembrane spans lie at 591-612 and 666-688; these read HVFL…HFSW and SSAY…MFLF. A chlorophyll a'-binding site is contributed by H677. M685 and Y693 together coordinate chlorophyll a. Phylloquinone is bound at residue W694. Residues 726–746 traverse the membrane as a helical segment; the sequence is AVGLAHYLLGGIGTTWAFFLA.

This sequence belongs to the PsaA/PsaB family. As to quaternary structure, the PsaA/B heterodimer binds the P700 chlorophyll special pair and subsequent electron acceptors. PSI consists of a core antenna complex that captures photons, and an electron transfer chain that converts photonic excitation into a charge separation. The eukaryotic PSI reaction center is composed of at least 11 subunits. P700 is a chlorophyll a/chlorophyll a' dimer, A0 is one or more chlorophyll a, A1 is one or both phylloquinones and FX is a shared 4Fe-4S iron-sulfur center. is required as a cofactor.

The protein resides in the plastid. It is found in the chloroplast thylakoid membrane. The catalysed reaction is reduced [plastocyanin] + hnu + oxidized [2Fe-2S]-[ferredoxin] = oxidized [plastocyanin] + reduced [2Fe-2S]-[ferredoxin]. PsaA and PsaB bind P700, the primary electron donor of photosystem I (PSI), as well as the electron acceptors A0, A1 and FX. PSI is a plastocyanin/cytochrome c6-ferredoxin oxidoreductase, converting photonic excitation into a charge separation, which transfers an electron from the donor P700 chlorophyll pair to the spectroscopically characterized acceptors A0, A1, FX, FA and FB in turn. Oxidized P700 is reduced on the lumenal side of the thylakoid membrane by plastocyanin or cytochrome c6. The polypeptide is Photosystem I P700 chlorophyll a apoprotein A1 (Thalassiosira pseudonana (Marine diatom)).